The primary structure comprises 290 residues: Phosphoribosylaminoimidazole-succinocarboxamide synthase (290 aa).

The protein belongs to the SAICAR synthetase family.

It carries out the reaction 5-amino-1-(5-phospho-D-ribosyl)imidazole-4-carboxylate + L-aspartate + ATP = (2S)-2-[5-amino-1-(5-phospho-beta-D-ribosyl)imidazole-4-carboxamido]succinate + ADP + phosphate + 2 H(+). Its pathway is purine metabolism; IMP biosynthesis via de novo pathway; 5-amino-1-(5-phospho-D-ribosyl)imidazole-4-carboxamide from 5-amino-1-(5-phospho-D-ribosyl)imidazole-4-carboxylate: step 1/2. The polypeptide is Phosphoribosylaminoimidazole-succinocarboxamide synthase (Haemophilus influenzae (strain PittGG)).